The sequence spans 876 residues: Alanine--tRNA ligase (876 aa).

Residues 2 to 461 (SKSTAEIRQA…VDSASEFKGY (460 aa)) form a catalytic region. Lysine 74 is subject to N6-acetyllysine. Residues 553–705 (DEARRARIRL…EAVTGEGAIA (153 aa)) form an editing region. Positions 564, 568, 666, and 670 each coordinate Zn(2+). The segment at 699 to 808 (TGEGAIATVH…STIIVLATVV (110 aa)) is important for oligomerization. Positions 766-875 (IDVNGVKLLV…SVKGWVSAKL (110 aa)) are C-Ala domain.

Belongs to the class-II aminoacyl-tRNA synthetase family. In terms of assembly, homotetramer. Zn(2+) is required as a cofactor.

It is found in the cytoplasm. The enzyme catalyses tRNA(Ala) + L-alanine + ATP = L-alanyl-tRNA(Ala) + AMP + diphosphate. It carries out the reaction (S)-lactate + ATP + H(+) = (S)-lactoyl-AMP + diphosphate. It catalyses the reaction (S)-lactoyl-AMP + L-lysyl-[protein] = N(6)-[(S)-lactoyl]-L-lysyl-[protein] + AMP + 2 H(+). With respect to regulation, acetylation at Lys-74 decreases the alanylation activity for tRNA(Ala); a protein that is fully acetylated is inactive in vitro. Its function is as follows. Catalyzes the attachment of L-alanine to tRNA(Ala) in a two-step reaction: L-alanine is first activated by ATP to form Ala-AMP and then transferred to the acceptor end of tRNA(Ala). AlaRS also incorrectly activates the sterically smaller amino acid glycine as well as the sterically larger amino acid L-serine; generates 2-fold more mischarged Gly than Ser. These mischarged amino acids occur because the of inherent physicochemical limitations on discrimination between closely related amino acids (Ala, Gly and Ser) in the charging step. In presence of high levels of lactate, also acts as a protein lactyltransferase that mediates lactylation of lysine residues in target proteins. Functionally, edits mischarged Ser-tRNA(Ala) and Gly-tRNA(Ala) but not incorrectly charged Ser-tRNA(Thr). Dtd edits Gly-tRNA(Ala) 4-fold better than does AlaRS. In terms of biological role, attaches Ala to transfer-messenger RNA (tmRNA, also known as 10Sa RNA, the product of the ssrA gene). tmRNA plays a major role in rescue of stalled ribosomes via trans-translation. This Escherichia coli (strain K12) protein is Alanine--tRNA ligase (alaS).